A 155-amino-acid polypeptide reads, in one-letter code: Small ribosomal subunit protein uS7 (155 aa).

Belongs to the universal ribosomal protein uS7 family. Part of the 30S ribosomal subunit. Contacts proteins S9 and S11.

In terms of biological role, one of the primary rRNA binding proteins, it binds directly to 16S rRNA where it nucleates assembly of the head domain of the 30S subunit. Is located at the subunit interface close to the decoding center, probably blocks exit of the E-site tRNA. In Petrotoga mobilis (strain DSM 10674 / SJ95), this protein is Small ribosomal subunit protein uS7.